Consider the following 275-residue polypeptide: Cell division protein FtsQ (275 aa).

The interval 1–20 (MRDLHKKKPRPVTQNRLKKP) is disordered. The Cytoplasmic segment spans residues 1-38 (MRDLHKKKPRPVTQNRLKKPPKTCKPINYRGILKKTAK). Residues 39–61 (VVGGAALISAVGCAGYGIYRIIA) form a helical membrane-spanning segment. Over 62-275 (GTTFFKLERI…YSDKIIVKKV (214 aa)) the chain is Periplasmic. The region spanning 66 to 134 (FKLERIEVSE…NTLSMQIAER (69 aa)) is the POTRA domain.

It belongs to the FtsQ/DivIB family. FtsQ subfamily.

It is found in the cell inner membrane. Essential cell division protein. This is Cell division protein FtsQ from Geotalea daltonii (strain DSM 22248 / JCM 15807 / FRC-32) (Geobacter daltonii).